Reading from the N-terminus, the 430-residue chain is Small ribosomal subunit protein uS9m (430 aa).

Residues 1–34 (MLSRLFLRHSNLRFVTLVSSKSNSQIFSSFIRPL) constitute a mitochondrion transit peptide. A disordered region spans residues 32–97 (RPLSTNSSGG…GGEGKWPEEP (66 aa)). Residues 39-48 (SGGGGNGDGN) show a composition bias toward gly residues. The span at 68-79 (GPFSSDDSFGSS) shows a compositional bias: low complexity. The segment covering 80–91 (GVAGSGLPGGEG) has biased composition (gly residues).

The protein belongs to the universal ribosomal protein uS9 family. In terms of assembly, interacts (via C terminus) with PIA2. Component of the mitochondrial ribosome small subunit. Expressed in root tips, young leaves, flowers and siliques.

Its subcellular location is the mitochondrion. Functionally, mitochondrial ribosomal protein required for central cell maturation. May work together with PIA2 in controlling female gametophyte development, possibly by regulating the expression of some mitochondrial proteins. This Arabidopsis thaliana (Mouse-ear cress) protein is Small ribosomal subunit protein uS9m.